The chain runs to 284 residues: 1D-myo-inositol 2-acetamido-2-deoxy-alpha-D-glucopyranoside deacetylase (284 aa).

Histidine 12, aspartate 15, and histidine 146 together coordinate Zn(2+).

Belongs to the MshB deacetylase family. Requires Zn(2+) as cofactor.

It carries out the reaction 1D-myo-inositol 2-acetamido-2-deoxy-alpha-D-glucopyranoside + H2O = 1D-myo-inositol 2-amino-2-deoxy-alpha-D-glucopyranoside + acetate. Catalyzes the deacetylation of 1D-myo-inositol 2-acetamido-2-deoxy-alpha-D-glucopyranoside (GlcNAc-Ins) in the mycothiol biosynthesis pathway. The chain is 1D-myo-inositol 2-acetamido-2-deoxy-alpha-D-glucopyranoside deacetylase from Mycolicibacterium gilvum (strain PYR-GCK) (Mycobacterium gilvum (strain PYR-GCK)).